Reading from the N-terminus, the 268-residue chain is MRDRLFFLLSKYGIRPRDSIGQHFLIIEDVIEKAIETANVNENDVILEVGPGLGFLTDELAKRAKKVYTIEIDQKIIEILKKEYSWNNVKIIQGDAVRVEWPKFNKVVSNIPYKISSPFTFKLLKTDFERAVVMYQLEFALRMVAKPGSRNYSRLSLMAQALGNVEIVMKIGKGAFYPRPKVDSALVLIEPRKDKIVLNENLVKALFQHRRKTVPRALKDSIHMLGVSKDEIRGIINNVPHSNKRVFQLYPEEVKDIEEYLKKHGIIS.

Positions 23, 25, 50, 71, 95, and 110 each coordinate S-adenosyl-L-methionine.

This sequence belongs to the class I-like SAM-binding methyltransferase superfamily. rRNA adenine N(6)-methyltransferase family. RsmA subfamily.

The protein localises to the cytoplasm. Functionally, specifically dimethylates two adjacent adenosines in the loop of a conserved hairpin near the 3'-end of 16S rRNA in the 30S particle. May play a critical role in biogenesis of 30S subunits. This Pyrococcus horikoshii (strain ATCC 700860 / DSM 12428 / JCM 9974 / NBRC 100139 / OT-3) protein is Probable ribosomal RNA small subunit methyltransferase A.